The sequence spans 194 residues: MYIAFEGVDCVGKSTQIELLKKCFKDAIFTKEPGGSELGVHLRKILLESKMQFSKKAELLLFLADRANLIDIHLVQNKNKLIISDRSFVSNMAYAKFDFDQNILFDLNSFATGGFFPQKIVFLHGSKELIEQRLSKKNLDSIEKRGVEYFLNIQNALEETLEILKTKIDIKILKLDASLSIENLHEKIKEFIND.

An ATP-binding site is contributed by 7–14; sequence GVDCVGKS.

The protein belongs to the thymidylate kinase family.

The catalysed reaction is dTMP + ATP = dTDP + ADP. Its function is as follows. Phosphorylation of dTMP to form dTDP in both de novo and salvage pathways of dTTP synthesis. In Campylobacter lari (strain RM2100 / D67 / ATCC BAA-1060), this protein is Thymidylate kinase.